A 128-amino-acid polypeptide reads, in one-letter code: Small ribosomal subunit protein uS11 (128 aa).

This sequence belongs to the universal ribosomal protein uS11 family. As to quaternary structure, part of the 30S ribosomal subunit. Interacts with proteins S7 and S18. Binds to IF-3.

Located on the platform of the 30S subunit, it bridges several disparate RNA helices of the 16S rRNA. Forms part of the Shine-Dalgarno cleft in the 70S ribosome. The protein is Small ribosomal subunit protein uS11 of Onion yellows phytoplasma (strain OY-M).